Reading from the N-terminus, the 212-residue chain is MPGGRRRVGSMNIAGFWILAQFVLLLVANVKSSADSELCGPRGARGPPGLSGLPGPPGYTGPIGMPGLTGRPGLPGLVEKCPPLPQSAFSVKLSGPFPGPSQPIVFQEVLYNHQGHFDPATGVFNCSVPGVYHFGFDIELFQSAVKVGLMRNGIQIRDKRAEAGDSHEQASGSSVLELEKGDRVWLESKLDREESEKGTTHAVFYGFLLNGN.

The N-terminal stretch at Met-1–Ala-34 is a signal peptide. The disordered stretch occupies residues Ser-36 to Pro-66. Positions Gly-40–Leu-53 are enriched in low complexity. The 37-residue stretch at Gly-40–Gly-76 folds into the Collagen-like domain. Residues Pro-82 to Asn-212 form the C1q domain. N-linked (GlcNAc...) asparagine glycosylation is present at Asn-125.

The protein resides in the secreted. This is Protein HP-25 homolog 1 from Bos taurus (Bovine).